The chain runs to 190 residues: Imidazoleglycerol-phosphate dehydratase (190 aa).

This sequence belongs to the imidazoleglycerol-phosphate dehydratase family.

Its subcellular location is the cytoplasm. It catalyses the reaction D-erythro-1-(imidazol-4-yl)glycerol 3-phosphate = 3-(imidazol-4-yl)-2-oxopropyl phosphate + H2O. It participates in amino-acid biosynthesis; L-histidine biosynthesis; L-histidine from 5-phospho-alpha-D-ribose 1-diphosphate: step 6/9. The polypeptide is Imidazoleglycerol-phosphate dehydratase (Methanococcus maripaludis (strain C5 / ATCC BAA-1333)).